We begin with the raw amino-acid sequence, 618 residues long: Glutamine--fructose-6-phosphate aminotransferase [isomerizing] (618 aa).

Cys2 serves as the catalytic Nucleophile; for GATase activity. The 225-residue stretch at 2 to 226 (CGIVGYAGRN…DFETAVLTPD (225 aa)) folds into the Glutamine amidotransferase type-2 domain. A disordered region spans residues 72–91 (WATHGRPSTENAHPHNSGGN). SIS domains lie at 295-434 (NDDE…VRGK) and 467-608 (CAEN…IDKP). The active-site For Fru-6P isomerization activity is the Lys613.

In terms of assembly, homodimer.

It localises to the cytoplasm. The enzyme catalyses D-fructose 6-phosphate + L-glutamine = D-glucosamine 6-phosphate + L-glutamate. Functionally, catalyzes the first step in hexosamine metabolism, converting fructose-6P into glucosamine-6P using glutamine as a nitrogen source. This is Glutamine--fructose-6-phosphate aminotransferase [isomerizing] from Methanosarcina mazei (strain ATCC BAA-159 / DSM 3647 / Goe1 / Go1 / JCM 11833 / OCM 88) (Methanosarcina frisia).